A 767-amino-acid polypeptide reads, in one-letter code: Cilium assembly protein DZIP1L (767 aa).

Residues 122-144 (QQRGQQELGRQADELKGVREESR) form a disordered region. A compositionally biased stretch (basic and acidic residues) spans 131–144 (RQADELKGVREESR). Residues 166-189 (HTCHLCDKTFMNATFLRGHIQRRH) form a C2H2-type zinc finger. The stretch at 205–406 (VEEVLEELRA…SQEEMIQSLS (202 aa)) forms a coiled coil. Position 426 is a phosphoserine (Ser-426). The disordered stretch occupies residues 518–767 (SRAKERQENG…SSGQPRVPAW (250 aa)). Polar residues-rich tracts occupy residues 533–547 (PDGQ…STLV) and 574–588 (RQSH…TQVS). The span at 607-616 (GPGMSTPPFS) shows a compositional bias: low complexity. Residues 658–675 (ENAQPPGQGSGTLVQSMV) show a composition bias toward polar residues. The segment covering 677-686 (NLEKQLEAPA) has biased composition (basic and acidic residues).

Belongs to the DZIP C2H2-type zinc-finger protein family. In terms of assembly, interacts with SEPTIN2.

Its subcellular location is the cytoplasm. It localises to the cytoskeleton. The protein localises to the cilium basal body. The protein resides in the microtubule organizing center. It is found in the centrosome. Its subcellular location is the centriole. Functionally, involved in primary cilium formation. Probably acts as a transition zone protein required for localization of PKD1/PC1 and PKD2/PC2 to the ciliary membrane. This Homo sapiens (Human) protein is Cilium assembly protein DZIP1L.